Consider the following 201-residue polypeptide: Cytochrome c biogenesis ATP-binding export protein CcmA (201 aa).

Residues 3-200 form the ABC transporter domain; sequence LIAENLGGER…EGAELRMGVA (198 aa). 35-42 serves as a coordination point for ATP; it reads GPNGSGKS.

Belongs to the ABC transporter superfamily. CcmA exporter (TC 3.A.1.107) family. The complex is composed of two ATP-binding proteins (CcmA) and two transmembrane proteins (CcmB).

The protein resides in the cell inner membrane. It catalyses the reaction heme b(in) + ATP + H2O = heme b(out) + ADP + phosphate + H(+). Its function is as follows. Part of the ABC transporter complex CcmAB involved in the biogenesis of c-type cytochromes; once thought to export heme, this seems not to be the case, but its exact role is uncertain. Responsible for energy coupling to the transport system. This chain is Cytochrome c biogenesis ATP-binding export protein CcmA, found in Mesorhizobium japonicum (strain LMG 29417 / CECT 9101 / MAFF 303099) (Mesorhizobium loti (strain MAFF 303099)).